We begin with the raw amino-acid sequence, 70 residues long: Conotoxin Vc6.10 (70 aa).

Positions 1–19 (MEKLTILLLVAAVLTSTQA) are cleaved as a signal peptide. Residues 20 to 40 (LIQGGADERQKAKINFLSRSD) constitute a propeptide that is removed on maturation. Disulfide bonds link Cys43/Cys57, Cys50/Cys62, and Cys56/Cys69.

It belongs to the conotoxin O2 superfamily. As to expression, expressed by the venom duct.

It localises to the secreted. Its function is as follows. Inhibits voltage-gated ion channels. This is Conotoxin Vc6.10 from Conus victoriae (Queen Victoria cone).